Consider the following 732-residue polypeptide: MFTAVNSNPNASESISGNSAFNFPSAPVSSLDTNNYGQRRPSLLSGTSPTSSFFNSSMISSNYTFPHGSNKQASLESPVSYSNPIPSLTWLSLDGDSPDSLVSTPTAPSANHHGNPFPNGKQSIKAMPSLVNLQEDSVISKFPNSLEVPFRKRSESTSSSLSGLHSDLRPLKTELYGQLNSECGARFPQTLKSPLTPIGGDSARTVSASTARTSDKFFPRHTRAHSDFWIPATSKPSRHASHSSIGDLTTITQSSISSGSGSFKPSWDGSFDSSLMAHQSYGTSPAFANGNSPTLKNDSSFFGSASVRPTVSPIGTSFRQSLPDISAFGIPKTETNPSEVVAPGTIPISVLPTSNFSAATPANPSLINQNGQEFLQQSRVLYLFHANKQRHFELSDILGNVVLFSTDQHGSRFIQQKLATATEEEREAVFQEIASTSCLQLMMDIFGNYVVQKYFEFGNEKQKQILLSQIKGHVFSLSLQMYGCRVVQKAIEYISPEHQVQLIQELDGHVLDCVCDQNGNHVIQKAIECIDTGHLQFILRALRPQIHVLSAHPYGCRVIQRAIEHCHSERKLIIEELLPHILKLTQDQYGNYVVQHILRTGSESDKKYIFDLMIDHLLFLSCHKFASNVVERCISYISDVDRRRILNKIISEKAENCSILMLMMKDKYANYVIQKLLDASPEEERDLLISYIYPHISVLKKFTYGKHLIMSVERFRQKSISAVPKLASKECK.

Residues 98–123 (PDSLVSTPTAPSANHHGNPFPNGKQS) form a disordered region. Residues 100 to 109 (SLVSTPTAPS) show a composition bias toward polar residues. The PUM-HD domain occupies 376–716 (QQSRVLYLFH…HLIMSVERFR (341 aa)). 8 Pumilio repeats span residues 396–431 (DILG…AVFQ), 432–468 (EIAS…ILLS), 469–504 (QIKG…QLIQ), 505–540 (ELDG…FILR), 541–576 (ALRP…IIEE), 577–611 (LLPH…YIFD), 612–647 (LMID…RILN), and 655–690 (ENCS…LLIS).

It belongs to the PUF3 family.

The protein localises to the mitochondrion outer membrane. Its subcellular location is the cytoplasm. RNA-binding protein involved in post-transcriptional regulation. Predominantly binds to mRNAs encoding mitochondrial proteins and localizes them to the vicinity of mitochondria for translation. Regulates mitochondrial biogenesis, motility and morphology. The chain is mRNA-binding protein puf3 (puf3) from Schizosaccharomyces pombe (strain 972 / ATCC 24843) (Fission yeast).